The sequence spans 159 residues: Phosphopantetheine adenylyltransferase (159 aa).

Residue threonine 10 coordinates substrate. ATP is bound by residues 10–11 (TF) and histidine 18. Lysine 42, methionine 74, and arginine 88 together coordinate substrate. Residues 89–91 (GLR), glutamate 99, and 124–130 (WSFISSS) each bind ATP.

The protein belongs to the bacterial CoaD family. Homohexamer. Mg(2+) is required as a cofactor.

It localises to the cytoplasm. The catalysed reaction is (R)-4'-phosphopantetheine + ATP + H(+) = 3'-dephospho-CoA + diphosphate. It functions in the pathway cofactor biosynthesis; coenzyme A biosynthesis; CoA from (R)-pantothenate: step 4/5. Reversibly transfers an adenylyl group from ATP to 4'-phosphopantetheine, yielding dephospho-CoA (dPCoA) and pyrophosphate. In Salmonella agona (strain SL483), this protein is Phosphopantetheine adenylyltransferase.